Here is a 595-residue protein sequence, read N- to C-terminus: Arginine--tRNA ligase (595 aa).

A 'HIGH' region motif is present at residues 132–142; that stretch reads ANPTGPLHVGH.

Belongs to the class-I aminoacyl-tRNA synthetase family. In terms of assembly, monomer.

Its subcellular location is the cytoplasm. It catalyses the reaction tRNA(Arg) + L-arginine + ATP = L-arginyl-tRNA(Arg) + AMP + diphosphate. The sequence is that of Arginine--tRNA ligase from Cupriavidus pinatubonensis (strain JMP 134 / LMG 1197) (Cupriavidus necator (strain JMP 134)).